Reading from the N-terminus, the 98-residue chain is RING finger protein Z (98 aa).

Residues 1-10 (MGNTKTKDRQ) show a composition bias toward basic and acidic residues. The segment at 1–26 (MGNTKTKDRQYQSNSSQPTNTSAPVL) is disordered. G2 carries the N-myristoyl glycine; by host lipid modification. Residues 11 to 23 (YQSNSSQPTNTSA) are compositionally biased toward polar residues. The RING-type; atypical zinc finger occupies 41–77 (CRCCWFADTNLVNCSNHYLCLKCLNTMLRRSNLCDIC). The PTAP/PSAP motif signature appears at 91 to 94 (PSAP).

Belongs to the arenaviridae Z protein family. Interacts with protein NP; this interaction probably directs the encapsidated genome to budding sites. Interacts (via RING domain) with polymerase L; this interaction inhibits viral transcription and replication, Z partially blocks the product exit tunnel for the releasing nascent RNA product. Interacts with the glycoprotein complex; this interaction plays a role in virion budding. Interacts with host eIF4E; this interaction results in eIF4E reduced affinity for its substrate, the 5'-m7 G cap structure. Interacts (via late-budding domain) with host TSG101; this interaction is essential for budding and release of viral particles. Interacts with host RPLP0; this interaction may serve to load ribosome-like particles inside the virion. Interacts with host PML; this interaction induces PML bodies redistribution in the cytoplasm upon viral infection. In terms of processing, myristoylation is required for the role of RING finger protein Z in assembly and budding.

The protein resides in the virion. It localises to the host cytoplasm. The protein localises to the host perinuclear region. Its subcellular location is the host cell membrane. Its function is as follows. Plays a crucial role in virion assembly and budding. Expressed late in the virus life cycle, it acts as an inhibitor of viral transcription and RNA synthesis by interacting with the viral polymerase L. Presumably recruits the NP encapsidated genome to cellular membranes at budding sites via direct interaction with NP. Plays critical roles in the final steps of viral release by interacting with host TSG101, a member of the vacuolar protein-sorting pathway and using other cellular host proteins involved in vesicle formation pathway. The budding of the virus progeny occurs after association of protein Z with the viral glycoprotein complex SSP-GP1-GP2 at the cell periphery, step that requires myristoylation of protein Z. Also selectively represses protein production by associating with host eIF4E. In cell-based minigenome assay, has an inhibitory effect on the ribonucleoprotein machinery (vRNP), which is responsible for the replication and transcription of the viral genome. This chain is RING finger protein Z, found in Chapare mammarenavirus (isolate Human/Bolivia/810419/2003).